Consider the following 112-residue polypeptide: MYAIFKSGGKQHKVIKGQTIRLEKINQSIGTQIKFKKILMCCNGTHITIGKPHIHNNFILANIINHGRHKKIKIIKFNRRKHYKKQQGHRQNFTDVLITNIHNNYREQNNGS.

It belongs to the bacterial ribosomal protein bL21 family. As to quaternary structure, part of the 50S ribosomal subunit. Contacts protein L20.

This protein binds to 23S rRNA in the presence of protein L20. The chain is Large ribosomal subunit protein bL21 from Buchnera aphidicola subsp. Baizongia pistaciae (strain Bp).